The following is a 235-amino-acid chain: Ribonuclease 3 (235 aa).

The RNase III domain maps to 6 to 131; that stretch reads IDQLKKLTGH…LIAVIYLDGG (126 aa). Glutamate 44 is a Mg(2+) binding site. The active site involves aspartate 48. Positions 117 and 120 each coordinate Mg(2+). The active site involves glutamate 120. Residues 156–225 form the DRBM domain; the sequence is DAKTELQEWA…AEKILRREGM (70 aa).

It belongs to the ribonuclease III family. Homodimer. It depends on Mg(2+) as a cofactor.

The protein localises to the cytoplasm. It catalyses the reaction Endonucleolytic cleavage to 5'-phosphomonoester.. Functionally, digests double-stranded RNA. Involved in the processing of primary rRNA transcript to yield the immediate precursors to the large and small rRNAs (23S and 16S). Processes some mRNAs, and tRNAs when they are encoded in the rRNA operon. Processes pre-crRNA and tracrRNA of type II CRISPR loci if present in the organism. The protein is Ribonuclease 3 of Bartonella bacilliformis (strain ATCC 35685 / KC583 / Herrer 020/F12,63).